Reading from the N-terminus, the 174-residue chain is Male-enhanced antigen 1 (174 aa).

2 disordered regions span residues 1-83 (MAAV…DGAA) and 95-123 (HLPD…IPMD). Composition is skewed to acidic residues over residues 38–48 (SSEEPEEEQEE), 65–82 (PEQE…EDGA), and 101–110 (LESEDEDEEG). Residue serine 103 is modified to Phosphoserine.

As to expression, highly expressed in testis. Transcripts can be found in primary and secondary spermatocytes, and spermatids, but the protein itself is only detected in spermatids. No expression in Leydig cells, spermatogonia, or sperm. Very weak expression in the heart, kidney, spleen, thymus and ovary.

Functionally, may play an important role in spermatogenesis and/or testis development. The polypeptide is Male-enhanced antigen 1 (Mea1) (Mus musculus (Mouse)).